An 840-amino-acid polypeptide reads, in one-letter code: Intracellular phospholipase A1 (840 aa).

2 disordered regions span residues 1–142 and 666–718; these read MSGS…RRRK and KKNK…AANA. The segment covering 26–39 has biased composition (basic and acidic residues); it reads GKVKQKEKPKEKQM. Over residues 97-111 the composition is skewed to low complexity; it reads SRPSGLPSNGNPGSS. Positions 564-827 constitute a DDHD domain; that stretch reads LEFKVKYLFA…ALFLANVLYC (264 aa). A compositionally biased stretch (basic and acidic residues) spans 668-680; the sequence is NKDDKTADARSGG. Residues 681 to 694 show a composition bias toward acidic residues; sequence DDENEDEDECDSDE.

It belongs to the PA-PLA1 family.

The enzyme catalyses 1,2-dihexadecanoyl-sn-glycero-3-phospho-(1D-myo-inositol) + H2O = 2-hexadecanoyl-sn-glycero-3-phospho-(1D-myo-inositol) + hexadecanoate + H(+). It carries out the reaction a 1,2-diacyl-sn-glycero-3-phospho-L-serine + H2O = a 2-acyl-sn-glycero-3-phospho-L-serine + a fatty acid + H(+). It catalyses the reaction 1-hexadecanoyl-2-(9Z-octadecenoyl)-sn-glycero-3-phospho-L-serine + H2O = 2-(9Z-octadecenoyl)-sn-glycero-3-phospho-L-serine + hexadecanoate + H(+). The catalysed reaction is 1,2-di-(9Z-octadecenoyl)-sn-glycero-3-phosphocholine + H2O = (9Z-octadecenoyl)-sn-glycero-3-phosphocholine + (9Z)-octadecenoate + H(+). The enzyme catalyses a 1,2-diacyl-sn-glycero-3-phosphocholine + H2O = a 1-acyl-sn-glycero-3-phosphocholine + a fatty acid + H(+). It carries out the reaction 1,2-dihexadecanoyl-sn-glycero-3-phosphocholine + H2O = 1-hexadecanoyl-sn-glycero-3-phosphocholine + hexadecanoate + H(+). Inhibited by E-6-bromomethylene-3-1-naphthalenyl-2H-tetrahydropyran-2-one (BEL) in vitro. In terms of biological role, hydrolyzes the ester bond at the sn-1 position of glycerophospholipids and produces 2-acyl lysophospholipids, being phosphatidylinositol (PI) its major substrate. PI is a versatile lipid that not only serves as a structural component of cellular membranes, but also plays important roles in signal transduction through distinct phosphorylated derivatives of the inositol head group. Catalyzes the hydrolysis of phosphatidylcholine at sn-2 position in vitro. Regulates asymmetric division, an important property of stem cells in C.elegans, by controlling the subcellular localizations of beta-catenin. This is Intracellular phospholipase A1 from Caenorhabditis elegans.